We begin with the raw amino-acid sequence, 269 residues long: Phosphate import ATP-binding protein PstB 2 (269 aa).

In terms of domain architecture, ABC transporter spans 23–264 (LHTEDLHVFY…PKIQATEDYV (242 aa)). Position 55–62 (55–62 (GPSGCGKS)) interacts with ATP.

Belongs to the ABC transporter superfamily. Phosphate importer (TC 3.A.1.7) family. The complex is composed of two ATP-binding proteins (PstB), two transmembrane proteins (PstC and PstA) and a solute-binding protein (PstS).

It localises to the cell membrane. The catalysed reaction is phosphate(out) + ATP + H2O = ADP + 2 phosphate(in) + H(+). Part of the ABC transporter complex PstSACB involved in phosphate import. Responsible for energy coupling to the transport system. The chain is Phosphate import ATP-binding protein PstB 2 from Enterococcus faecalis (strain ATCC 700802 / V583).